Here is a 386-residue protein sequence, read N- to C-terminus: Acetate kinase (386 aa).

Mg(2+) is bound at residue asparagine 7. Position 14 (lysine 14) interacts with ATP. Arginine 78 lines the substrate pocket. The active-site Proton donor/acceptor is the aspartate 135. ATP is bound by residues 195 to 199 (HLGNG), 268 to 270 (DMR), and 316 to 320 (GIGEN). Glutamate 370 lines the Mg(2+) pocket.

This sequence belongs to the acetokinase family. As to quaternary structure, homodimer. It depends on Mg(2+) as a cofactor. Requires Mn(2+) as cofactor.

It is found in the cytoplasm. The enzyme catalyses acetate + ATP = acetyl phosphate + ADP. It participates in metabolic intermediate biosynthesis; acetyl-CoA biosynthesis; acetyl-CoA from acetate: step 1/2. Catalyzes the formation of acetyl phosphate from acetate and ATP. Can also catalyze the reverse reaction. This Pseudarthrobacter chlorophenolicus (strain ATCC 700700 / DSM 12829 / CIP 107037 / JCM 12360 / KCTC 9906 / NCIMB 13794 / A6) (Arthrobacter chlorophenolicus) protein is Acetate kinase.